Reading from the N-terminus, the 193-residue chain is Flagellin B3 (193 aa).

Positions 1–12 (MFEFITDEDERG) are excised as a propeptide.

It belongs to the archaeal flagellin family. Glycosylated.

Its subcellular location is the archaeal flagellum. In terms of biological role, flagellin is the subunit protein which polymerizes to form the filaments of archaeal flagella. This is Flagellin B3 (flaB3) from Halobacterium salinarum (strain ATCC 700922 / JCM 11081 / NRC-1) (Halobacterium halobium).